Reading from the N-terminus, the 475-residue chain is Protein FIZZY-RELATED 1 (475 aa).

The segment at 1 to 27 is disordered; sequence MEEDESTTPKKKSDSQLNLPPSMNRPT. The segment covering 15-27 has biased composition (polar residues); the sequence is SQLNLPPSMNRPT. 7 WD repeats span residues 166–203, 207–246, 249–289, 290–329, 332–374, 376–417, and 420–459; these read QDDFYLNLVDWSAQNVLAVGLGNCVYLWNACSSKVTKL, GVDETVCSVGWALRGTHLAIGTSSGTVQIWDVLRCKNIRT, GHRL…SKLK, GHKSEICGLKWSSDNRELASGGNDNKLFVWNQHSTQPVLR, EHAA…HLNC, DTNS…KLAT, and GHSYRVLYLAVSPDGQTIVTGAGDETLRFWNVFPSPKSQS.

This sequence belongs to the WD repeat CDC20/Fizzy family. Associates with the APC/C complex. Interacts with CDC20-1, CDC20-2, CYCA1-1, CYCA1-2, CYCA3-4, CYCB1-1 and CYCB1-2. Binds to GIG1. In terms of tissue distribution, expressed in the root tip, predominantly in the root cap, quiescent center cells, surrounding stem cells and columella.

The protein localises to the nucleus. The protein operates within protein modification; protein ubiquitination. Functionally, activator protein that regulates the ubiquitin ligase activity and substrate specificity of the anaphase promoting complex/cyclosome (APC/C). Required for meristem organization and maintenance of quiescent center identity and stem cells. The protein is Protein FIZZY-RELATED 1 (FZR1) of Arabidopsis thaliana (Mouse-ear cress).